The chain runs to 230 residues: Demethylmenaquinone methyltransferase (230 aa).

S-adenosyl-L-methionine is bound by residues Thr62, Asp80, 100–101 (DA), and Ser117.

This sequence belongs to the class I-like SAM-binding methyltransferase superfamily. MenG/UbiE family.

It catalyses the reaction a 2-demethylmenaquinol + S-adenosyl-L-methionine = a menaquinol + S-adenosyl-L-homocysteine + H(+). The protein operates within quinol/quinone metabolism; menaquinone biosynthesis; menaquinol from 1,4-dihydroxy-2-naphthoate: step 2/2. Methyltransferase required for the conversion of demethylmenaquinol (DMKH2) to menaquinol (MKH2). This Mycolicibacterium paratuberculosis (strain ATCC BAA-968 / K-10) (Mycobacterium paratuberculosis) protein is Demethylmenaquinone methyltransferase.